A 206-amino-acid polypeptide reads, in one-letter code: Probable chemoreceptor glutamine deamidase CheD 1 (206 aa).

Belongs to the CheD family.

The enzyme catalyses L-glutaminyl-[protein] + H2O = L-glutamyl-[protein] + NH4(+). Its function is as follows. Probably deamidates glutamine residues to glutamate on methyl-accepting chemotaxis receptors (MCPs), playing an important role in chemotaxis. This Shewanella oneidensis (strain ATCC 700550 / JCM 31522 / CIP 106686 / LMG 19005 / NCIMB 14063 / MR-1) protein is Probable chemoreceptor glutamine deamidase CheD 1.